The following is a 243-amino-acid chain: Venom protease (243 aa).

Residues V1 to K243 form the Peptidase S1 domain. Residues C34 and C50 are joined by a disulfide bond. Residues H49 and D97 each act as charge relay system in the active site. Disulfide bonds link C165-C178 and C189-C217. The Charge relay system role is filled by S193.

This sequence belongs to the peptidase S1 family. Expressed by the venom duct.

Its subcellular location is the secreted. The protein is Venom protease of Bombus pensylvanicus (American bumblebee).